We begin with the raw amino-acid sequence, 1266 residues long: Phosphatidylinositol 3,4,5-trisphosphate 5-phosphatase 2A (1266 aa).

Residues 15–111 form the SH2 domain; the sequence is WMHRDLSRAA…GLVTTLLYPV (97 aa). The segment covering 114 to 123 has biased composition (basic and acidic residues); it reads EETTEDRDYS. Disordered stretches follow at residues 114 to 159 and 879 to 951; these read EETT…NVTA and DMGG…DATT. The span at 136–159 shows a compositional bias: polar residues; it reads TASTSSMTGSALVSTDTPPENVTA. Composition is skewed to basic and acidic residues over residues 915–924 and 931–944; these read RVSEEGEKSS and TKEE…KQDP. Residues 958–961 carry the NPXY motif motif; that stretch reads NPAY. Tyr961 carries the phosphotyrosine modification. Disordered regions lie at residues 986–1132 and 1147–1174; these read PLAN…SALD and EVEY…SFPS. Over residues 994–1012 the composition is skewed to low complexity; it reads PPAGSVGKSKPPSGSSAQG. Residues 1045-1056 show a composition bias toward pro residues; it reads RPPPDFPPPPLP. Residues 1203–1266 form the SAM domain; sequence SVDCSVGEWL…LLASLKQQQK (64 aa).

It belongs to the inositol 1,4,5-trisphosphate 5-phosphatase family. Post-translationally, tyrosine phosphorylated by the members of the SRC family after exposure to a diverse array of extracellular stimuli.

The protein localises to the cytoplasm. It is found in the cytosol. It localises to the cytoskeleton. Its subcellular location is the membrane. The protein resides in the cell projection. The protein localises to the filopodium. It is found in the lamellipodium. It localises to the nucleus. Its subcellular location is the nucleus speckle. It catalyses the reaction a 1,2-diacyl-sn-glycero-3-phospho-(1D-myo-inositol-3,4,5-trisphosphate) + H2O = a 1,2-diacyl-sn-glycero-3-phospho-(1D-myo-inositol-3,4-bisphosphate) + phosphate. Phosphatidylinositol (PtdIns) phosphatase that specifically hydrolyzes the 5-phosphate of phosphatidylinositol-3,4,5-trisphosphate (PtdIns(3,4,5)P3) to produce PtdIns(3,4)P2, thereby negatively regulating the PI3K (phosphoinositide 3-kinase) pathways. Plays a central role in regulation of PI3K-dependent insulin signaling, although the precise molecular mechanisms and signaling pathways remain unclear. Part of a signaling pathway that regulates actin cytoskeleton remodeling. Required for the maintenance and dynamic remodeling of actin structures as well as in endocytosis, having a major impact on ligand-induced EGFR internalization and degradation. Participates in regulation of cortical and submembraneous actin. Regulates cell adhesion and cell spreading. Acts as a negative regulator of the FC-gamma-RIIA receptor (FCGR2A). Mediates signaling from the FC-gamma-RIIB receptor (FCGR2B), playing a central role in terminating signal transduction from activating immune/hematopoietic cell receptor systems. May also hydrolyze PtdIns(1,3,4,5)P4, and could thus affect the levels of the higher inositol polyphosphates like InsP6. The polypeptide is Phosphatidylinositol 3,4,5-trisphosphate 5-phosphatase 2A (inppl1a) (Danio rerio (Zebrafish)).